A 243-amino-acid chain; its full sequence is uncharacterized protein (243 aa).

Its subcellular location is the nucleus. It localises to the nucleolus. This is an uncharacterized protein from Schizosaccharomyces pombe (strain 972 / ATCC 24843) (Fission yeast).